Consider the following 371-residue polypeptide: Interstrand DNA cross-link repair glycosylase (371 aa).

Residues 37–39 carry the QXQ; important for activity motif; it reads QAQ.

The protein belongs to the DNA glycosylase AlkZ-like family.

Functionally, DNA glycosylase involved in the repair of interstrand DNA cross-links (ICLs), which are highly toxic DNA lesions that covalently tether the opposing strands of DNA, thereby inhibiting essential cellular processes such as DNA replication and transcription. Acts by unhooking both sides of the ICLs, forming abasic (AP) sites on both strands. AlkZ specifically repairs DNA damage induced by azinomycin B (AZB), a natural product with potent antibiotic and antitumor activities that interacts covalently with duplex DNA and forms ICLs. AlkZ thus confers self-resistance to azinomycin B, which is produced by S.sahachiroi. It may also protect target sites by protein-DNA interaction. Binds sequence non-specifically to native DNA and structure-specifically to azinomycin B-modified sites, with higher affinity to azinomycin B-modified sites and lower affinity to native DNA duplex. In vitro, also acts on monoadducts and can catalyze the excision of N7-methylguanine (7mGua) from an oligonucleotide containing N7-methyldeoxyguanosine (d7mG). Is a monofunctional DNA glycosylase that does not have lyase activity. This chain is Interstrand DNA cross-link repair glycosylase, found in Streptomyces sahachiroi.